Consider the following 138-residue polypeptide: Large ribosomal subunit protein uL16 (138 aa).

Belongs to the universal ribosomal protein uL16 family. As to quaternary structure, part of the 50S ribosomal subunit.

In terms of biological role, binds 23S rRNA and is also seen to make contacts with the A and possibly P site tRNAs. The sequence is that of Large ribosomal subunit protein uL16 from Anaeromyxobacter dehalogenans (strain 2CP-1 / ATCC BAA-258).